The following is a 244-amino-acid chain: MGCRDVHAATVLSFLCGIASVAGLFAGTLLPNWRKLRLITFNRNEKNLTVYTGLWVKCARYDGSSDCLMYDTTWYSSVDQLDLRVLQFALPLSMLIAMGALLLCLIGMCNTAFRSSVPNIKLAKCLVNSAGCHLVAGLLFFLAGTVSLSPSIWVIFYNIHLNKKFEPVFSFDYAVYVTIASAGGLFMTSLILFIWYCTCKSLPSPFWQPLYSHPPSMHTYSQPYSARSRLSAIEIDIPVVSHTT.

Residues 1-10 are Cytoplasmic-facing; that stretch reads MGCRDVHAAT. The helical transmembrane segment at 11 to 31 threads the bilayer; it reads VLSFLCGIASVAGLFAGTLLP. The Extracellular segment spans residues 32 to 87; that stretch reads NWRKLRLITFNRNEKNLTVYTGLWVKCARYDGSSDCLMYDTTWYSSVDQLDLRVLQ. The chain crosses the membrane as a helical span at residues 88–108; sequence FALPLSMLIAMGALLLCLIGM. The Cytoplasmic segment spans residues 109 to 135; it reads CNTAFRSSVPNIKLAKCLVNSAGCHLV. The helical transmembrane segment at 136-156 threads the bilayer; it reads AGLLFFLAGTVSLSPSIWVIF. At 157-174 the chain is on the extracellular side; it reads YNIHLNKKFEPVFSFDYA. The helical transmembrane segment at 175 to 195 threads the bilayer; that stretch reads VYVTIASAGGLFMTSLILFIW. The Cytoplasmic portion of the chain corresponds to 196 to 244; sequence YCTCKSLPSPFWQPLYSHPPSMHTYSQPYSARSRLSAIEIDIPVVSHTT. A phosphoserine mark is found at S228 and S231.

This sequence belongs to the claudin family. In terms of assembly, interacts with OCLN.

It is found in the cell junction. Its subcellular location is the tight junction. The protein resides in the cell membrane. Its function is as follows. Plays a major role in tight junction-specific obliteration of the intercellular space, through calcium-independent cell-adhesion activity. This chain is Claudin-12 (CLDN12), found in Pongo abelii (Sumatran orangutan).